Consider the following 236-residue polypeptide: Uridylate kinase (236 aa).

ATP is bound at residue K10–G13. G52 provides a ligand contact to UMP. Residues G53 and R57 each contribute to the ATP site. Residues D72 and T133–T140 each bind UMP. Residues T160, Y166, and D169 each coordinate ATP.

Belongs to the UMP kinase family. As to quaternary structure, homohexamer.

It is found in the cytoplasm. It catalyses the reaction UMP + ATP = UDP + ADP. Its pathway is pyrimidine metabolism; CTP biosynthesis via de novo pathway; UDP from UMP (UMPK route): step 1/1. With respect to regulation, inhibited by UTP. Functionally, catalyzes the reversible phosphorylation of UMP to UDP. The polypeptide is Uridylate kinase (Polaromonas naphthalenivorans (strain CJ2)).